The sequence spans 1007 residues: Lysosomal alpha-mannosidase (1007 aa).

A signal peptide spans 1 to 47 (MGASVLPLGLGAGDCQSSSGRRMSACLPRTALSFLLSLLLATPGARA). Cystine bridges form between Cys-53-Cys-356 and Cys-266-Cys-271. Zn(2+) contacts are provided by His-70 and Asp-72. N-linked (GlcNAc...) asparagine glycosylation is present at Asn-131. Asp-194 is a Zn(2+) binding site. The active-site Nucleophile is Asp-194. Asn-308, Asn-343, and Asn-365 each carry an N-linked (GlcNAc...) asparagine glycan. 2 disulfides stabilise this stretch: Cys-410/Cys-470 and Cys-491/Cys-499. Position 444 (His-444) interacts with Zn(2+). 6 N-linked (GlcNAc...) asparagine glycosylation sites follow: Asn-495, Asn-540, Asn-639, Asn-686, Asn-760, and Asn-927.

Belongs to the glycosyl hydrolase 38 family. The cofactor is Zn(2+).

The protein resides in the lysosome. The enzyme catalyses Hydrolysis of terminal, non-reducing alpha-D-mannose residues in alpha-D-mannosides.. In terms of biological role, necessary for the catabolism of N-linked carbohydrates released during glycoprotein turnover. The sequence is that of Lysosomal alpha-mannosidase (MAN2B1) from Cavia porcellus (Guinea pig).